The chain runs to 1297 residues: Phosphoribosylformylglycinamidine synthase (1297 aa).

ATP contacts are provided by residues 307–318 and A678; that span reads GASTGSGGEIRD. E718, N722, and D886 together coordinate Mg(2+). Residues 1044–1297 enclose the Glutamine amidotransferase type-1 domain; it reads MAILREQGVN…MFQNARKYFG (254 aa). C1137 serves as the catalytic Nucleophile. Catalysis depends on residues H1262 and E1264.

In the N-terminal section; belongs to the FGAMS family. In terms of assembly, monomer.

The protein localises to the cytoplasm. It catalyses the reaction N(2)-formyl-N(1)-(5-phospho-beta-D-ribosyl)glycinamide + L-glutamine + ATP + H2O = 2-formamido-N(1)-(5-O-phospho-beta-D-ribosyl)acetamidine + L-glutamate + ADP + phosphate + H(+). Its pathway is purine metabolism; IMP biosynthesis via de novo pathway; 5-amino-1-(5-phospho-D-ribosyl)imidazole from N(2)-formyl-N(1)-(5-phospho-D-ribosyl)glycinamide: step 1/2. Its function is as follows. Phosphoribosylformylglycinamidine synthase involved in the purines biosynthetic pathway. Catalyzes the ATP-dependent conversion of formylglycinamide ribonucleotide (FGAR) and glutamine to yield formylglycinamidine ribonucleotide (FGAM) and glutamate. In Vibrio cholerae serotype O1 (strain ATCC 39315 / El Tor Inaba N16961), this protein is Phosphoribosylformylglycinamidine synthase.